A 326-amino-acid polypeptide reads, in one-letter code: Glutaminase 2 (326 aa).

Positions 73, 125, 169, 176, 200, 252, and 270 each coordinate substrate.

It belongs to the glutaminase family. In terms of assembly, homotetramer.

It carries out the reaction L-glutamine + H2O = L-glutamate + NH4(+). This Bacillus cereus (strain ATCC 14579 / DSM 31 / CCUG 7414 / JCM 2152 / NBRC 15305 / NCIMB 9373 / NCTC 2599 / NRRL B-3711) protein is Glutaminase 2.